The chain runs to 378 residues: Quinolinate synthase (378 aa).

Iminosuccinate-binding residues include histidine 59 and serine 80. A [4Fe-4S] cluster-binding site is contributed by cysteine 125. Iminosuccinate is bound by residues 151-153 (YAN) and serine 168. Cysteine 212 contacts [4Fe-4S] cluster. Iminosuccinate contacts are provided by residues 238-240 (HPE) and threonine 255. Residue cysteine 309 participates in [4Fe-4S] cluster binding.

This sequence belongs to the quinolinate synthase family. Type 1 subfamily. [4Fe-4S] cluster serves as cofactor.

The protein localises to the cytoplasm. The enzyme catalyses iminosuccinate + dihydroxyacetone phosphate = quinolinate + phosphate + 2 H2O + H(+). It participates in cofactor biosynthesis; NAD(+) biosynthesis; quinolinate from iminoaspartate: step 1/1. Its function is as follows. Catalyzes the condensation of iminoaspartate with dihydroxyacetone phosphate to form quinolinate. In Burkholderia thailandensis (strain ATCC 700388 / DSM 13276 / CCUG 48851 / CIP 106301 / E264), this protein is Quinolinate synthase.